Reading from the N-terminus, the 745-residue chain is Copper-transporting ATPase (745 aa).

An HMA domain is found at 1 to 67 (MKESFYIEGM…LIEKLGYSPK (67 aa)). Over 1–83 (MKESFYIEGM…KKEFFSPNVK (83 aa)) the chain is Cytoplasmic. Cu cation is bound by residues Cys12 and Cys15. Residues 84–104 (LALAVIFTLFVVYLSMGAMLS) form a helical membrane-spanning segment. Residues 105 to 124 (PSLLPKSLLAIDNHSNFLNA) are Extracellular-facing. A helical membrane pass occupies residues 125-144 (CLQLIGTLIVMHWGRDFYIQ). Over 145-151 (GFKALWH) the chain is Cytoplasmic. Residues 152 to 172 (RQPNMSSLIAIGTSAALISSL) form a helical membrane-spanning segment. Residues 173–194 (WQLYLVYTDHYTDQWSYGHYYF) are Extracellular-facing. The helical transmembrane segment at 195–215 (ESVCVILMFVMVGKRIENVSK) threads the bilayer. Residues 216 to 343 (DKALDAMQAL…KAEISRLADK (128 aa)) lie on the Cytoplasmic side of the membrane. A helical transmembrane segment spans residues 344-366 (VSSVFVPSVIAIAILAFVVWLII). Residues 367–379 (APKPDFWWNFGIA) lie on the Extracellular side of the membrane. The chain crosses the membrane as a helical span at residues 380–397 (LEVFVSVLVISCPCALGL). The Cytoplasmic portion of the chain corresponds to 398-685 (ATLMSILVAN…KLSQATIKNI (288 aa)). Asp435 functions as the 4-aspartylphosphate intermediate in the catalytic mechanism. Asp631 and Asp635 together coordinate Mg(2+). A helical transmembrane segment spans residues 686–705 (KENLFWAFCYNSVFIPLACG). Topologically, residues 706-716 (VLYKANIMLSP) are extracellular. The chain crosses the membrane as a helical span at residues 717 to 735 (AIAGLAMSLSSVSVVLNSQ). The Cytoplasmic segment spans residues 736-745 (RLRNFKIKDH).

The protein belongs to the cation transport ATPase (P-type) (TC 3.A.3) family. Type IB subfamily.

It is found in the cell membrane. The catalysed reaction is Cu(2+)(in) + ATP + H2O = Cu(2+)(out) + ADP + phosphate + H(+). In terms of biological role, probably involved in copper export. The sequence is that of Copper-transporting ATPase (copA) from Helicobacter pylori (Campylobacter pylori).